A 97-amino-acid chain; its full sequence is HssA/B-like protein 38 (97 aa).

The segment at 1–29 is disordered; sequence MTLFSSISSISNPMTSSKSSISSFGSGTS.

The protein belongs to the hssA/B family.

In Dictyostelium discoideum (Social amoeba), this protein is HssA/B-like protein 38 (hssl38).